A 63-amino-acid chain; its full sequence is Large ribosomal subunit protein uL30 (63 aa).

The protein belongs to the universal ribosomal protein uL30 family. Part of the 50S ribosomal subunit.

The chain is Large ribosomal subunit protein uL30 from Caulobacter sp. (strain K31).